Consider the following 440-residue polypeptide: 3-phosphoshikimate 1-carboxyvinyltransferase (440 aa).

K26, S27, and R31 together coordinate 3-phosphoshikimate. K26 is a phosphoenolpyruvate binding site. Residues G100 and R134 each coordinate phosphoenolpyruvate. 3-phosphoshikimate-binding residues include S180, S181, Q182, S208, D323, N346, and K350. Q182 provides a ligand contact to phosphoenolpyruvate. D323 functions as the Proton acceptor in the catalytic mechanism. Phosphoenolpyruvate is bound by residues R354, R398, and K423.

Belongs to the EPSP synthase family. In terms of assembly, monomer.

It localises to the cytoplasm. The enzyme catalyses 3-phosphoshikimate + phosphoenolpyruvate = 5-O-(1-carboxyvinyl)-3-phosphoshikimate + phosphate. Its pathway is metabolic intermediate biosynthesis; chorismate biosynthesis; chorismate from D-erythrose 4-phosphate and phosphoenolpyruvate: step 6/7. Functionally, catalyzes the transfer of the enolpyruvyl moiety of phosphoenolpyruvate (PEP) to the 5-hydroxyl of shikimate-3-phosphate (S3P) to produce enolpyruvyl shikimate-3-phosphate and inorganic phosphate. This is 3-phosphoshikimate 1-carboxyvinyltransferase from Pasteurella multocida (strain Pm70).